The chain runs to 177 residues: Large ribosomal subunit protein uL6 (177 aa).

It belongs to the universal ribosomal protein uL6 family. As to quaternary structure, part of the 50S ribosomal subunit.

This protein binds to the 23S rRNA, and is important in its secondary structure. It is located near the subunit interface in the base of the L7/L12 stalk, and near the tRNA binding site of the peptidyltransferase center. The sequence is that of Large ribosomal subunit protein uL6 from Micrococcus luteus (strain ATCC 4698 / DSM 20030 / JCM 1464 / CCM 169 / CCUG 5858 / IAM 1056 / NBRC 3333 / NCIMB 9278 / NCTC 2665 / VKM Ac-2230) (Micrococcus lysodeikticus).